A 101-amino-acid chain; its full sequence is NAD(P)H-quinone oxidoreductase subunit 4L, chloroplastic (101 aa).

3 helical membrane-spanning segments follow: residues 2-22 (MLEH…YGLI), 32-52 (MCLE…SDFF), and 61-81 (IFSI…LAIV).

The protein belongs to the complex I subunit 4L family. NDH is composed of at least 16 different subunits, 5 of which are encoded in the nucleus.

It localises to the plastid. The protein localises to the chloroplast thylakoid membrane. The enzyme catalyses a plastoquinone + NADH + (n+1) H(+)(in) = a plastoquinol + NAD(+) + n H(+)(out). It catalyses the reaction a plastoquinone + NADPH + (n+1) H(+)(in) = a plastoquinol + NADP(+) + n H(+)(out). Its function is as follows. NDH shuttles electrons from NAD(P)H:plastoquinone, via FMN and iron-sulfur (Fe-S) centers, to quinones in the photosynthetic chain and possibly in a chloroplast respiratory chain. The immediate electron acceptor for the enzyme in this species is believed to be plastoquinone. Couples the redox reaction to proton translocation, and thus conserves the redox energy in a proton gradient. The chain is NAD(P)H-quinone oxidoreductase subunit 4L, chloroplastic from Helianthus annuus (Common sunflower).